Reading from the N-terminus, the 134-residue chain is Probable glycine cleavage system H protein (134 aa).

Positions 29-110 (TVLVGITDYA…PYGAWIAKIK (82 aa)) constitute a Lipoyl-binding domain. Residue K70 is modified to N6-lipoyllysine.

This sequence belongs to the GcvH family. As to quaternary structure, the glycine cleavage system is composed of four proteins: P, T, L and H. The cofactor is (R)-lipoate.

Functionally, the glycine cleavage system catalyzes the degradation of glycine. The H protein shuttles the methylamine group of glycine from the P protein to the T protein. The polypeptide is Probable glycine cleavage system H protein (Pyrococcus abyssi (strain GE5 / Orsay)).